A 329-amino-acid chain; its full sequence is DNA-directed RNA polymerase subunit alpha (329 aa).

The interval 1 to 235 is alpha N-terminal domain (alpha-NTD); sequence MQGSVTEFLK…EQLDAFVDLR (235 aa). The tract at residues 249-329 is alpha C-terminal domain (alpha-CTD); the sequence is FDPILLRPVD…NWPPASIAED (81 aa).

The protein belongs to the RNA polymerase alpha chain family. In terms of assembly, homodimer. The RNAP catalytic core consists of 2 alpha, 1 beta, 1 beta' and 1 omega subunit. When a sigma factor is associated with the core the holoenzyme is formed, which can initiate transcription.

The catalysed reaction is RNA(n) + a ribonucleoside 5'-triphosphate = RNA(n+1) + diphosphate. In terms of biological role, DNA-dependent RNA polymerase catalyzes the transcription of DNA into RNA using the four ribonucleoside triphosphates as substrates. In Aliivibrio salmonicida (strain LFI1238) (Vibrio salmonicida (strain LFI1238)), this protein is DNA-directed RNA polymerase subunit alpha.